Reading from the N-terminus, the 517-residue chain is UDP-N-acetylmuramyl-tripeptide synthetase (517 aa).

Threonine 48 is a UDP-N-acetyl-alpha-D-muramoyl-L-alanyl-D-glutamate binding site. 125–131 contributes to the ATP binding site; it reads GTKGKTT. UDP-N-acetyl-alpha-D-muramoyl-L-alanyl-D-glutamate-binding positions include 169-170, serine 196, and arginine 204; that span reads TT. Position 238 is an N6-carboxylysine (lysine 238).

It belongs to the MurCDEF family. MurE subfamily. Carboxylation is probably crucial for Mg(2+) binding and, consequently, for the gamma-phosphate positioning of ATP.

The protein resides in the cytoplasm. It participates in cell wall biogenesis; peptidoglycan biosynthesis. In terms of biological role, catalyzes the addition of an amino acid to the nucleotide precursor UDP-N-acetylmuramoyl-L-alanyl-D-glutamate (UMAG) in the biosynthesis of bacterial cell-wall peptidoglycan. This is UDP-N-acetylmuramyl-tripeptide synthetase from Bifidobacterium longum (strain NCC 2705).